Reading from the N-terminus, the 348-residue chain is Photosystem II protein D1 (348 aa).

A run of 3 helical transmembrane segments spans residues 33-50, 122-137, and 146-160; these read YIGWFGILMFPLLVLATV, HFIFGAGAYMGREWEF, and WIFVAFSAPLVAASA. Position 122 (histidine 122) interacts with chlorophyll a. A pheophytin a-binding site is contributed by tyrosine 130. [CaMn4O5] cluster is bound by residues aspartate 174 and glutamate 193. Residues 201–222 form a helical membrane-spanning segment; the sequence is FHILGVAAVFGGSLFSAMHGSL. Histidine 202 is a chlorophyll a binding site. A quinone is bound by residues histidine 219 and 268-269; that span reads SF. Histidine 219 is a binding site for Fe cation. Histidine 276 serves as a coordination point for Fe cation. A helical transmembrane segment spans residues 278–292; that stretch reads FLAAWPVIGIWFTSL. Histidine 336, glutamate 337, aspartate 346, and alanine 348 together coordinate [CaMn4O5] cluster.

The protein belongs to the reaction center PufL/M/PsbA/D family. As to quaternary structure, PSII is composed of 1 copy each of membrane proteins PsbA, PsbB, PsbC, PsbD, PsbE, PsbF, PsbH, PsbI, PsbJ, PsbK, PsbL, PsbM, PsbT, PsbX, PsbY, PsbZ, Psb30/Ycf12, at least 3 peripheral proteins of the oxygen-evolving complex and a large number of cofactors. It forms dimeric complexes. Requires The D1/D2 heterodimer binds P680, chlorophylls that are the primary electron donor of PSII, and subsequent electron acceptors. It shares a non-heme iron and each subunit binds pheophytin, quinone, additional chlorophylls, carotenoids and lipids. D1 provides most of the ligands for the Mn4-Ca-O5 cluster of the oxygen-evolving complex (OEC). There is also a Cl(-1) ion associated with D1 and D2, which is required for oxygen evolution. The PSII complex binds additional chlorophylls, carotenoids and specific lipids. as cofactor. Tyr-165 forms a radical intermediate that is referred to as redox-active TyrZ, YZ or Y-Z.

It is found in the plastid. The protein localises to the chloroplast thylakoid membrane. It carries out the reaction 2 a plastoquinone + 4 hnu + 2 H2O = 2 a plastoquinol + O2. In terms of biological role, photosystem II (PSII) is a light-driven water:plastoquinone oxidoreductase that uses light energy to abstract electrons from H(2)O, generating O(2) and a proton gradient subsequently used for ATP formation. It consists of a core antenna complex that captures photons, and an electron transfer chain that converts photonic excitation into a charge separation. The D1/D2 (PsbA/PsbD) reaction center heterodimer binds P680, the primary electron donor of PSII as well as several subsequent electron acceptors. In Heterocapsa triquetra (Dinoflagellate), this protein is Photosystem II protein D1.